Here is a 586-residue protein sequence, read N- to C-terminus: Transcription elongation regulator 1-like protein (586 aa).

The tract at residues 1-30 is disordered; that stretch reads MQAGARFQRRRRQLQQQQPRRRQPLLWPMD. Residues 7–23 are compositionally biased toward basic residues; the sequence is FQRRRRQLQQQQPRRRQ. One can recognise a WW 1 domain in the interval 148-181; that stretch reads TPIGKSWIDKRIPNCKIFFNNSFALDSTWIHPEE. Disordered stretches follow at residues 281–344 and 378–448; these read TSPV…PGSP and DLNR…QILL. Over residues 306 to 317 the composition is skewed to basic and acidic residues; that stretch reads KSRDGDKEDKEP. In terms of domain architecture, WW 2 spans 339–372; sequence PVPGSPWCVVWTGDDRVFFFNPTMHLSVWEKPMD. Composition is skewed to basic and acidic residues over residues 378–387, 411–421, and 428–439; these read DLNRIIEDPP, DQDVKTKRNRT, and KPEEAKREDKGT. FF domains lie at 450-503 and 515-570; these read LEER…FVKT and KLLL…FILI.

In Homo sapiens (Human), this protein is Transcription elongation regulator 1-like protein (TCERG1L).